Here is a 650-residue protein sequence, read N- to C-terminus: PTS system mannose-specific EIIBCA component (650 aa).

A PTS EIIB type-2 domain is found at 1 to 98 (MKLLAITSCP…PEELIQKALN (98 aa)). Cys-9 acts as the Phosphocysteine intermediate; for EIIB activity in catalysis. Positions 123-456 (IYRHLMNGVS…SLVTALFVNV (334 aa)) constitute a PTS EIIC type-2 domain. A run of 7 helical transmembrane segments spans residues 133-153 (FMVP…TLGG), 174-194 (IGSA…AYSI), 199-219 (GLVP…YDSA), 221-241 (GAGF…ALWI), 256-276 (IIII…FLIG), 297-317 (SSIL…GGPV), and 336-356 (IMGP…IATF). Position 365 is a phosphoserine (Ser-365). 3 helical membrane passes run 369-389 (MGKA…IPFA), 396-416 (VIPS…IGNV), and 436-456 (VLMF…FVNV). Positions 504 to 649 (DIISPELIEP…EEAYKLLEEI (146 aa)) constitute a PTS EIIA type-2 domain. His-566 serves as the catalytic Tele-phosphohistidine intermediate; for EIIA activity.

It localises to the cell membrane. The catalysed reaction is D-mannose(out) + N(pros)-phospho-L-histidyl-[protein] = D-mannose 6-phosphate(in) + L-histidyl-[protein]. Functionally, the phosphoenolpyruvate-dependent sugar phosphotransferase system (sugar PTS), a major carbohydrate active -transport system, catalyzes the phosphorylation of incoming sugar substrates concomitantly with their translocation across the cell membrane. This system is involved in mannose transport. The chain is PTS system mannose-specific EIIBCA component (manP) from Bacillus subtilis (strain 168).